The chain runs to 283 residues: MDIIKTTGQMQQWSERVRKQGKTICLVPTMGYFHDGHLSLMDAGRTQADHLVVSLFVNPIQFGANEDLDAYPTDHDRDFKLAELKGAAVVFAPGPEELYPPGFQTAVTLSQLPLHLCGLSRPVHFQGVATVVTKLFNIVGPDVAVFGSKDFQQLQVIRRLVKDLNFNIRIMGCPIVREADGLAMSSRNLYLSADERNSALSLSCSLALAAEMVQAGETRCRPIIAAVEKFILGHQGTQVDYVCLCDPLTLEAVDTITSPVLLALAVQVGTTRLIDNQVIDPEQ.

ATP is bound at residue 30 to 37 (MGYFHDGH). Residue His-37 is the Proton donor of the active site. Position 61 (Gln-61) interacts with (R)-pantoate. Gln-61 contacts beta-alanine. 147 to 150 (GSKD) serves as a coordination point for ATP. Gln-153 is a binding site for (R)-pantoate. ATP contacts are provided by residues Val-176 and 184-187 (MSSR).

The protein belongs to the pantothenate synthetase family. Homodimer.

It localises to the cytoplasm. The catalysed reaction is (R)-pantoate + beta-alanine + ATP = (R)-pantothenate + AMP + diphosphate + H(+). The protein operates within cofactor biosynthesis; (R)-pantothenate biosynthesis; (R)-pantothenate from (R)-pantoate and beta-alanine: step 1/1. Functionally, catalyzes the condensation of pantoate with beta-alanine in an ATP-dependent reaction via a pantoyl-adenylate intermediate. The protein is Pantothenate synthetase of Desulforapulum autotrophicum (strain ATCC 43914 / DSM 3382 / VKM B-1955 / HRM2) (Desulfobacterium autotrophicum).